A 376-amino-acid chain; its full sequence is MTDFPTLPSEFIPGDGRFGCGPSKVRPEQIQAIVDGSASVIGTSHRQPAVKNVVGSIREGLSDLFSLPEGYEIILSLGGATAFWDAATFGLIEKKSGHLSFGEFSSKFAKASKLAPWLYEPEIVTAETGDAPAPQAFEGADVIAWAHNETSTGAMVPVLRPEGSEGSLVAIDATSGAGGLPVDIKNSDVYYFSPQKCFASDGGLWLAAMSPAALERIEKINASDRFIPEFLNLQTAVDNSLKNQTYNTPAVATLLMLDNQVKWMNSNGGLDGMVARTTASSSALYNWAEAREEASPYVADAAKRSLVVGTIDFDDSIDAAVIAKILRANGILDTEPYRKLGRNQLRIGMFPAIDSTDVEKLTGAIDFILDGGFAKK.

Arginine 46 contributes to the L-glutamate binding site. Pyridoxal 5'-phosphate is bound by residues 80–81 (AT), phenylalanine 104, threonine 150, aspartate 172, and glutamine 195. The residue at position 196 (lysine 196) is an N6-(pyridoxal phosphate)lysine. Residue 247 to 248 (NT) coordinates pyridoxal 5'-phosphate.

This sequence belongs to the class-V pyridoxal-phosphate-dependent aminotransferase family. SerC subfamily. As to quaternary structure, homodimer. Pyridoxal 5'-phosphate serves as cofactor.

The protein resides in the cytoplasm. The enzyme catalyses O-phospho-L-serine + 2-oxoglutarate = 3-phosphooxypyruvate + L-glutamate. The catalysed reaction is 4-(phosphooxy)-L-threonine + 2-oxoglutarate = (R)-3-hydroxy-2-oxo-4-phosphooxybutanoate + L-glutamate. The protein operates within amino-acid biosynthesis; L-serine biosynthesis; L-serine from 3-phospho-D-glycerate: step 2/3. It participates in cofactor biosynthesis; pyridoxine 5'-phosphate biosynthesis; pyridoxine 5'-phosphate from D-erythrose 4-phosphate: step 3/5. Catalyzes the reversible conversion of 3-phosphohydroxypyruvate to phosphoserine and of 3-hydroxy-2-oxo-4-phosphonooxybutanoate to phosphohydroxythreonine. This is Phosphoserine aminotransferase from Corynebacterium glutamicum (strain R).